The sequence spans 431 residues: Probable pectate lyase 1 (431 aa).

The first 20 residues, 1 to 20 (MAVLPTWLLAMMCLLFFVGA), serve as a signal peptide directing secretion. N-linked (GlcNAc...) asparagine glycosylation is found at asparagine 23, asparagine 28, and asparagine 65. The Ca(2+) site is built by aspartate 227, aspartate 251, and aspartate 255. Arginine 307 is a catalytic residue.

The protein belongs to the polysaccharide lyase 1 family. Ca(2+) serves as cofactor. In terms of tissue distribution, expressed in flowers, but not in leaves.

It catalyses the reaction Eliminative cleavage of (1-&gt;4)-alpha-D-galacturonan to give oligosaccharides with 4-deoxy-alpha-D-galact-4-enuronosyl groups at their non-reducing ends.. It participates in glycan metabolism; pectin degradation; 2-dehydro-3-deoxy-D-gluconate from pectin: step 2/5. The polypeptide is Probable pectate lyase 1 (Arabidopsis thaliana (Mouse-ear cress)).